The sequence spans 284 residues: 2-dehydro-3-deoxyphosphooctonate aldolase (284 aa).

The protein belongs to the KdsA family.

The protein resides in the cytoplasm. The catalysed reaction is D-arabinose 5-phosphate + phosphoenolpyruvate + H2O = 3-deoxy-alpha-D-manno-2-octulosonate-8-phosphate + phosphate. It functions in the pathway carbohydrate biosynthesis; 3-deoxy-D-manno-octulosonate biosynthesis; 3-deoxy-D-manno-octulosonate from D-ribulose 5-phosphate: step 2/3. Its pathway is bacterial outer membrane biogenesis; lipopolysaccharide biosynthesis. The polypeptide is 2-dehydro-3-deoxyphosphooctonate aldolase (Erwinia tasmaniensis (strain DSM 17950 / CFBP 7177 / CIP 109463 / NCPPB 4357 / Et1/99)).